A 384-amino-acid chain; its full sequence is 1-deoxy-D-xylulose 5-phosphate reductoisomerase (384 aa).

Residues T10, G11, S12, I13, G36, and N123 each contribute to the NADPH site. 1-deoxy-D-xylulose 5-phosphate is bound at residue K124. Residue E125 participates in NADPH binding. Mn(2+) is bound at residue D149. 4 residues coordinate 1-deoxy-D-xylulose 5-phosphate: S150, E151, S175, and H198. E151 provides a ligand contact to Mn(2+). G204 provides a ligand contact to NADPH. 1-deoxy-D-xylulose 5-phosphate-binding residues include S211, N216, K217, and E220. A Mn(2+)-binding site is contributed by E220.

It belongs to the DXR family. Mg(2+) serves as cofactor. It depends on Mn(2+) as a cofactor.

It carries out the reaction 2-C-methyl-D-erythritol 4-phosphate + NADP(+) = 1-deoxy-D-xylulose 5-phosphate + NADPH + H(+). It functions in the pathway isoprenoid biosynthesis; isopentenyl diphosphate biosynthesis via DXP pathway; isopentenyl diphosphate from 1-deoxy-D-xylulose 5-phosphate: step 1/6. Functionally, catalyzes the NADPH-dependent rearrangement and reduction of 1-deoxy-D-xylulose-5-phosphate (DXP) to 2-C-methyl-D-erythritol 4-phosphate (MEP). The polypeptide is 1-deoxy-D-xylulose 5-phosphate reductoisomerase (Chlorobium phaeovibrioides (strain DSM 265 / 1930) (Prosthecochloris vibrioformis (strain DSM 265))).